We begin with the raw amino-acid sequence, 130 residues long: Small ribosomal subunit protein uS9 (130 aa).

A disordered region spans residues 109–130; that stretch reads RMKERKKYGLKGARRAPQFSKR. The span at 111 to 130 shows a compositional bias: basic residues; it reads KERKKYGLKGARRAPQFSKR.

The protein belongs to the universal ribosomal protein uS9 family.

The polypeptide is Small ribosomal subunit protein uS9 (Alkaliphilus metalliredigens (strain QYMF)).